The chain runs to 336 residues: Ornithine carbamoyltransferase, catabolic (336 aa).

Residues 62 to 65 (STRT), Gln-89, Arg-113, and 140 to 143 (HPTQ) contribute to the carbamoyl phosphate site. L-ornithine-binding positions include Asn-172, Asp-236, and 240 to 241 (SM). Carbamoyl phosphate is bound by residues 277-278 (CL) and Arg-322.

Belongs to the aspartate/ornithine carbamoyltransferase superfamily. OTCase family.

The protein localises to the cytoplasm. It catalyses the reaction carbamoyl phosphate + L-ornithine = L-citrulline + phosphate + H(+). Its pathway is amino-acid degradation; L-arginine degradation via ADI pathway; carbamoyl phosphate from L-arginine: step 2/2. Functionally, reversibly catalyzes the transfer of the carbamoyl group from carbamoyl phosphate (CP) to the N(epsilon) atom of ornithine (ORN) to produce L-citrulline. In Staphylococcus aureus (strain MSSA476), this protein is Ornithine carbamoyltransferase, catabolic.